Consider the following 214-residue polypeptide: Probable transaldolase (214 aa).

Lysine 83 serves as the catalytic Schiff-base intermediate with substrate.

It belongs to the transaldolase family. Type 3B subfamily.

It is found in the cytoplasm. The enzyme catalyses D-sedoheptulose 7-phosphate + D-glyceraldehyde 3-phosphate = D-erythrose 4-phosphate + beta-D-fructose 6-phosphate. It participates in carbohydrate degradation; pentose phosphate pathway; D-glyceraldehyde 3-phosphate and beta-D-fructose 6-phosphate from D-ribose 5-phosphate and D-xylulose 5-phosphate (non-oxidative stage): step 2/3. In terms of biological role, transaldolase is important for the balance of metabolites in the pentose-phosphate pathway. The protein is Probable transaldolase of Carboxydothermus hydrogenoformans (strain ATCC BAA-161 / DSM 6008 / Z-2901).